Reading from the N-terminus, the 150-residue chain is Large ribosomal subunit protein bL9 (150 aa).

This sequence belongs to the bacterial ribosomal protein bL9 family.

In terms of biological role, binds to the 23S rRNA. In Alkalilimnicola ehrlichii (strain ATCC BAA-1101 / DSM 17681 / MLHE-1), this protein is Large ribosomal subunit protein bL9.